The chain runs to 161 residues: Photosystem II extrinsic protein V (161 aa).

An N-terminal signal peptide occupies residues 1–25 (MKKFFISVVFIVLLTFTTFINSATA). Residues Cys61, Cys64, His65, and His116 each contribute to the heme c site.

This sequence belongs to the cytochrome c family. PsbV subfamily. As to quaternary structure, PSII is composed of 1 copy each of membrane proteins PsbA, PsbB, PsbC, PsbD, PsbE, PsbF, PsbH, PsbI, PsbJ, PsbK, PsbL, PsbM, PsbT, PsbX, PsbY, PsbZ, Psb30/Ycf12, peripheral proteins PsbO, CyanoQ (PsbQ), PsbU, PsbV and a large number of cofactors. It forms dimeric complexes. Heme c is required as a cofactor.

It is found in the cellular thylakoid membrane. Its function is as follows. One of the extrinsic, lumenal subunits of photosystem II (PSII). PSII is a light-driven water plastoquinone oxidoreductase, using light energy to abstract electrons from H(2)O, generating a proton gradient subsequently used for ATP formation. The extrinsic proteins stabilize the structure of photosystem II oxygen-evolving complex (OEC), the ion environment of oxygen evolution and protect the OEC against heat-induced inactivation. Low-potential cytochrome c that plays a role in the OEC of PSII. In Trichodesmium erythraeum (strain IMS101), this protein is Photosystem II extrinsic protein V.